The primary structure comprises 134 residues: Putative pre-16S rRNA nuclease (134 aa).

This sequence belongs to the YqgF nuclease family.

Its subcellular location is the cytoplasm. Functionally, could be a nuclease involved in processing of the 5'-end of pre-16S rRNA. This Hydrogenovibrio crunogenus (strain DSM 25203 / XCL-2) (Thiomicrospira crunogena) protein is Putative pre-16S rRNA nuclease.